The chain runs to 1198 residues: Fibronectin type-III domain-containing protein 3A (1198 aa).

Basic and acidic residues predominate over residues 188 to 201 (KKLKDRQGTQKDKM). Residues 188–257 (KKLKDRQGTQ…VDPEMEEKDE (70 aa)) are disordered. Phosphoserine is present on residues Ser203, Ser207, and Ser213. Fibronectin type-III domains follow at residues 268-369 (NIVK…TLSC), 373-465 (PPNA…TSGC), 469-562 (VPAS…TCPD), 566-660 (VPVK…TPAV), 664-757 (PCLP…TAPG), 761-851 (QCRP…TPPS), 863-950 (SDDD…TKPL), 951-1045 (PPDP…TPKS), and 1049-1151 (ALKA…TEPP). An N6-acetyllysine modification is found at Lys384. Residues 1177–1197 (ILVVFAFFSILIAFIIQYFVI) form a helical membrane-spanning segment.

This sequence belongs to the FNDC3 family. Testis. Localizes to the acrosome of spermatids, as well as to Leydig cells. Can be detected on the acrosome beginning at steps 2-3 and continuing until step 12 of spermiogenesis.

It localises to the golgi apparatus membrane. In terms of biological role, mediates spermatid-Sertoli adhesion during spermatogenesis. The sequence is that of Fibronectin type-III domain-containing protein 3A (Fndc3a) from Mus musculus (Mouse).